A 70-amino-acid chain; its full sequence is Protein FlmC (70 aa).

In terms of biological role, component of a type I toxin-antitoxin (TA) system. Either this protein or sequences upstream of it are required for translation of downstream flmA; this could be translationally coupled to flmA. The sequence is that of Protein FlmC (flmC) from Escherichia coli (strain K12).